Here is a 335-residue protein sequence, read N- to C-terminus: Ketol-acid reductoisomerase (NADP(+)) (335 aa).

The KARI N-terminal Rossmann domain maps to 2-182; that stretch reads VEMFYDKDAD…GCTRAGVIET (181 aa). NADP(+) contacts are provided by residues 25-28, arginine 48, serine 51, and 83-86; these read YGSQ and DEIQ. Histidine 108 is an active-site residue. Residue glycine 134 coordinates NADP(+). A KARI C-terminal knotted domain is found at 183-328; that stretch reads TFREETETDL…KKLRAMMPWL (146 aa). Aspartate 191, glutamate 195, glutamate 227, and glutamate 231 together coordinate Mg(2+). A substrate-binding site is contributed by serine 252.

It belongs to the ketol-acid reductoisomerase family. Requires Mg(2+) as cofactor.

It catalyses the reaction (2R)-2,3-dihydroxy-3-methylbutanoate + NADP(+) = (2S)-2-acetolactate + NADPH + H(+). It carries out the reaction (2R,3R)-2,3-dihydroxy-3-methylpentanoate + NADP(+) = (S)-2-ethyl-2-hydroxy-3-oxobutanoate + NADPH + H(+). It functions in the pathway amino-acid biosynthesis; L-isoleucine biosynthesis; L-isoleucine from 2-oxobutanoate: step 2/4. The protein operates within amino-acid biosynthesis; L-valine biosynthesis; L-valine from pyruvate: step 2/4. In terms of biological role, involved in the biosynthesis of branched-chain amino acids (BCAA). Catalyzes an alkyl-migration followed by a ketol-acid reduction of (S)-2-acetolactate (S2AL) to yield (R)-2,3-dihydroxy-isovalerate. In the isomerase reaction, S2AL is rearranged via a Mg-dependent methyl migration to produce 3-hydroxy-3-methyl-2-ketobutyrate (HMKB). In the reductase reaction, this 2-ketoacid undergoes a metal-dependent reduction by NADPH to yield (R)-2,3-dihydroxy-isovalerate. This chain is Ketol-acid reductoisomerase (NADP(+)), found in Methanococcoides burtonii (strain DSM 6242 / NBRC 107633 / OCM 468 / ACE-M).